Here is a 206-residue protein sequence, read N- to C-terminus: Uridine kinase (206 aa).

11–18 (GGSASGKT) contributes to the ATP binding site.

It belongs to the uridine kinase family.

It is found in the cytoplasm. It carries out the reaction uridine + ATP = UMP + ADP + H(+). It catalyses the reaction cytidine + ATP = CMP + ADP + H(+). The protein operates within pyrimidine metabolism; CTP biosynthesis via salvage pathway; CTP from cytidine: step 1/3. It participates in pyrimidine metabolism; UMP biosynthesis via salvage pathway; UMP from uridine: step 1/1. This is Uridine kinase from Lactococcus lactis subsp. lactis (strain IL1403) (Streptococcus lactis).